The following is a 151-amino-acid chain: MRIWVDADACPGAIKEILFRAAQRTGVELTLVANHPIRVPPSPVIRSVQVAAGFDVADHEIVRRVAAGDLVITGDIPLAAEVIEAGAQALNPRGERYTPETIRERLNMRDFMDTLRASGVDTGGSAALSQRDRQAFANELDRILARRPSQG.

This sequence belongs to the UPF0178 family.

In Halorhodospira halophila (strain DSM 244 / SL1) (Ectothiorhodospira halophila (strain DSM 244 / SL1)), this protein is UPF0178 protein Hhal_1913.